Reading from the N-terminus, the 950-residue chain is MKLSELFNPNEFAARHLSFGDEAALLAAVGEKSMDEFVGNTLPQSIRMPSELDLPEALTEADALAKLKGIASKNVINKSYIGLGYYPTRVPNVILRNVLENPGWYTAYTPYQAEIAQGRLEALLNFQQVCIDLTGFPVAGASLLDEATAAAEAMAMAHRVGKVKSERFFVDARVYPQTLDVMKTRAKYFGFELVVSDFAQADEGEYFGALFQYVGKDGDVQDLQDVIGRLKAKGTIVAVAADIMSLVLLKSPAELGADIALGNTQRFGVPMGFGGPHAAYFAFKDEFKRSAPGRIIGVSKDASGKPALRMALSTREQHIRREKATSNICTAQALLANLAGMYAVYHGPKGVKRIANRIHTLASVFADALVSDGLKVVHEVFFDTVTVDFGSKEKADQVFAAALESGYNLRSVNNTQVAAAFHETSVYEDLADLYRAFTGKDTFTFADDVKGRLNAELLRQDDILQHPVYNSYHTEHEMLRYLKKLEDRDLAMNRSMISLGSCTMKLNATAEMLPITWTEFSDIHPYAPEAQTAGYRELLADMENSLKAITGFDAISFQPNSGAQGEYSGMLAIRRYQEAQGEAHRNICLIPKSAHGTNPATAAMLGLKVVVVDTDEHGNVNIDDLKAKAEQHRDALSAIMITYPSTHGVYEEGIRDICRIIHENGGQVYMDGANLNAQIGIMQPAEVGADVLHMNLHKTFCIPHGGGGPGMGPIGLKAHLAPFAPGHTLTDTHSASAGQTSVAAAAFGSASILPITWMYLTMMGKQGMEQATRWALLNANYVAKRLSEDYPILYTGKNGRIAHECIVDLRPLKAESGITETDIAKRLMDYGFHAPTVSFPVAGTLMIEPTESESKAELDRFIAALKSIRREVQKVIDGEWPKDDNPLVNAPHTAADITGEWAHPYSREEAVFPLPFVREHKFWPFVNRVDDVYGDRNLVCSCPPMENYED.

Residue Lys698 is modified to N6-(pyridoxal phosphate)lysine.

Belongs to the GcvP family. The glycine cleavage system is composed of four proteins: P, T, L and H. The cofactor is pyridoxal 5'-phosphate.

The enzyme catalyses N(6)-[(R)-lipoyl]-L-lysyl-[glycine-cleavage complex H protein] + glycine + H(+) = N(6)-[(R)-S(8)-aminomethyldihydrolipoyl]-L-lysyl-[glycine-cleavage complex H protein] + CO2. In terms of biological role, the glycine cleavage system catalyzes the degradation of glycine. The P protein binds the alpha-amino group of glycine through its pyridoxal phosphate cofactor; CO(2) is released and the remaining methylamine moiety is then transferred to the lipoamide cofactor of the H protein. This is Glycine dehydrogenase (decarboxylating) from Neisseria gonorrhoeae (strain ATCC 700825 / FA 1090).